A 142-amino-acid polypeptide reads, in one-letter code: Large ribosomal subunit protein uL13 (142 aa).

Belongs to the universal ribosomal protein uL13 family. Part of the 50S ribosomal subunit.

Its function is as follows. This protein is one of the early assembly proteins of the 50S ribosomal subunit, although it is not seen to bind rRNA by itself. It is important during the early stages of 50S assembly. The chain is Large ribosomal subunit protein uL13 from Psychrobacter arcticus (strain DSM 17307 / VKM B-2377 / 273-4).